The sequence spans 307 residues: D-alanine--D-alanine ligase (307 aa).

Residues 108–301 (KEVFAAAGLP…FPEFCAWMVE (194 aa)) form the ATP-grasp domain. Residue 135-185 (LPPPYVVKPNCEGSSVGVYIVQADANGPPRLAPDMPRDLMVETYIPGRELT) coordinates ATP. Residues aspartate 252, glutamate 268, and asparagine 270 each coordinate Mg(2+).

The protein belongs to the D-alanine--D-alanine ligase family. Requires Mg(2+) as cofactor. Mn(2+) is required as a cofactor.

Its subcellular location is the cytoplasm. It catalyses the reaction 2 D-alanine + ATP = D-alanyl-D-alanine + ADP + phosphate + H(+). It functions in the pathway cell wall biogenesis; peptidoglycan biosynthesis. Cell wall formation. The chain is D-alanine--D-alanine ligase from Cereibacter sphaeroides (strain ATCC 17025 / ATH 2.4.3) (Rhodobacter sphaeroides).